The chain runs to 243 residues: Ubiquinone/menaquinone biosynthesis C-methyltransferase UbiE (243 aa).

S-adenosyl-L-methionine contacts are provided by residues threonine 69, aspartate 90, and 116 to 117; that span reads DA.

Belongs to the class I-like SAM-binding methyltransferase superfamily. MenG/UbiE family.

The catalysed reaction is a 2-demethylmenaquinol + S-adenosyl-L-methionine = a menaquinol + S-adenosyl-L-homocysteine + H(+). It carries out the reaction a 2-methoxy-6-(all-trans-polyprenyl)benzene-1,4-diol + S-adenosyl-L-methionine = a 5-methoxy-2-methyl-3-(all-trans-polyprenyl)benzene-1,4-diol + S-adenosyl-L-homocysteine + H(+). It functions in the pathway quinol/quinone metabolism; menaquinone biosynthesis; menaquinol from 1,4-dihydroxy-2-naphthoate: step 2/2. It participates in cofactor biosynthesis; ubiquinone biosynthesis. Methyltransferase required for the conversion of demethylmenaquinol (DMKH2) to menaquinol (MKH2) and the conversion of 2-polyprenyl-6-methoxy-1,4-benzoquinol (DDMQH2) to 2-polyprenyl-3-methyl-6-methoxy-1,4-benzoquinol (DMQH2). This Paraburkholderia phytofirmans (strain DSM 17436 / LMG 22146 / PsJN) (Burkholderia phytofirmans) protein is Ubiquinone/menaquinone biosynthesis C-methyltransferase UbiE.